The chain runs to 525 residues: G-protein regulator 1 (525 aa).

The 22-residue stretch at 424–445 (PVDMMDLIFSMSSRMDDQRTEL) folds into the GoLoco domain. Residues 488 to 525 (HTMNRILKRSKKSKSSLDSTNSMQGDDTRSDDVTMTSK) are disordered.

As to quaternary structure, interacts with gpr-1, lin-5 and GDP-bound goa-1.

Its subcellular location is the cytoplasm. It localises to the cell cortex. It is found in the cytoskeleton. The protein resides in the spindle. Functionally, in the 1-cell embryo, probably together with gpr-2, controls nuclear rotation and spindle elongation during mitosis. Complex of gpr-1 and gpr-2, in association with lin-5, activates G-protein signaling to affect mitotic spindle force. Polarity determinants (par genes) may regulate lin-5/gpr-1/gpr-2/goa-1 locally to create the asymmetric forces that drive spindle movement. The sequence is that of G-protein regulator 1 (gpr-1) from Caenorhabditis elegans.